The sequence spans 318 residues: Porphobilinogen deaminase (318 aa).

An S-(dipyrrolylmethanemethyl)cysteine modification is found at C241.

The protein belongs to the HMBS family. In terms of assembly, monomer. It depends on dipyrromethane as a cofactor.

It carries out the reaction 4 porphobilinogen + H2O = hydroxymethylbilane + 4 NH4(+). Its pathway is porphyrin-containing compound metabolism; protoporphyrin-IX biosynthesis; coproporphyrinogen-III from 5-aminolevulinate: step 2/4. In terms of biological role, tetrapolymerization of the monopyrrole PBG into the hydroxymethylbilane pre-uroporphyrinogen in several discrete steps. The protein is Porphobilinogen deaminase of Geobacter sp. (strain M21).